A 78-amino-acid polypeptide reads, in one-letter code: Small ribosomal subunit protein bS16 (78 aa).

Belongs to the bacterial ribosomal protein bS16 family.

This Maridesulfovibrio salexigens (strain ATCC 14822 / DSM 2638 / NCIMB 8403 / VKM B-1763) (Desulfovibrio salexigens) protein is Small ribosomal subunit protein bS16.